The primary structure comprises 325 residues: Acetyl-coenzyme A carboxylase carboxyl transferase subunit alpha (325 aa).

The 255-residue stretch at 44–298 (QLEGRAEQLR…KTAILSNLEE (255 aa)) folds into the CoA carboxyltransferase C-terminal domain.

The protein belongs to the AccA family. As to quaternary structure, acetyl-CoA carboxylase is a heterohexamer composed of biotin carboxyl carrier protein (AccB), biotin carboxylase (AccC) and two subunits each of ACCase subunit alpha (AccA) and ACCase subunit beta (AccD).

The protein resides in the cytoplasm. It catalyses the reaction N(6)-carboxybiotinyl-L-lysyl-[protein] + acetyl-CoA = N(6)-biotinyl-L-lysyl-[protein] + malonyl-CoA. It functions in the pathway lipid metabolism; malonyl-CoA biosynthesis; malonyl-CoA from acetyl-CoA: step 1/1. In terms of biological role, component of the acetyl coenzyme A carboxylase (ACC) complex. First, biotin carboxylase catalyzes the carboxylation of biotin on its carrier protein (BCCP) and then the CO(2) group is transferred by the carboxyltransferase to acetyl-CoA to form malonyl-CoA. The protein is Acetyl-coenzyme A carboxylase carboxyl transferase subunit alpha of Acaryochloris marina (strain MBIC 11017).